The primary structure comprises 321 residues: Ribose import permease protein RbsC (321 aa).

Over 1 to 22 (MTTQTVSGRRYFTKAWLMEQKS) the chain is Cytoplasmic. The chain crosses the membrane as a helical span at residues 23–43 (LIALLVLIAIVSTLSPNFFTI). Topologically, residues 44–56 (NNLFNILQQTSVN) are periplasmic. Residues 57-77 (AIMAVGMTLVILTSGIDLSVG) traverse the membrane as a helical segment. The Cytoplasmic segment spans residues 78–125 (SLLALTGAVAASIVGIEVNALVAVAAALALGAAIGAVTGVIVAKGRVQ). The chain crosses the membrane as a helical span at residues 126–145 (AFIATLVMMLLLRGVTMVYT). Residues 146 to 168 (NGSPVNTGFTENADLFGWFGIGR) are Periplasmic-facing. A helical transmembrane segment spans residues 169–190 (PLGVPTPVWIMGIVFLAAWYML). Over 191 to 220 (HHTRLGRYIYALGGNEAATRLSGINVNKIK) the chain is Cytoplasmic. A helical transmembrane segment spans residues 221 to 240 (IIVYSLCGLLASLAGIIEVA). At 241–294 (RLSSAQPTAGTGYELDAIAAVVLGGTSLAGGKGRIVGTLIGALILGFLNNGLNL) the chain is on the periplasmic side. Residues 295–316 (LGVSSYYQMIVKAVVILLAVLV) traverse the membrane as a helical segment. Over 317–321 (DNKKQ) the chain is Cytoplasmic.

The protein belongs to the binding-protein-dependent transport system permease family. AraH/RbsC subfamily. The complex is composed of an ATP-binding protein (RbsA), two transmembrane proteins (RbsC) and a solute-binding protein (RbsB).

The protein localises to the cell inner membrane. In terms of biological role, part of the ABC transporter complex RbsABC involved in ribose import. Probably responsible for the translocation of the substrate across the membrane. This chain is Ribose import permease protein RbsC (rbsC), found in Escherichia coli O157:H7.